A 78-amino-acid polypeptide reads, in one-letter code: Large ribosomal subunit protein bL28 (78 aa).

This sequence belongs to the bacterial ribosomal protein bL28 family.

The polypeptide is Large ribosomal subunit protein bL28 (Pectobacterium atrosepticum (strain SCRI 1043 / ATCC BAA-672) (Erwinia carotovora subsp. atroseptica)).